A 263-amino-acid polypeptide reads, in one-letter code: Elongation factor Ts (263 aa).

The interval 82 to 85 (TDFV) is involved in Mg(2+) ion dislocation from EF-Tu. The segment covering 221 to 251 (APPAVVEAPVAETPEPAVAETPEAKPAATES) has biased composition (low complexity). Positions 221-263 (APPAVVEAPVAETPEPAVAETPEAKPAATESKPAKSKSAKKKK) are disordered. The segment covering 254–263 (AKSKSAKKKK) has biased composition (basic residues).

It belongs to the EF-Ts family.

Its subcellular location is the cytoplasm. Functionally, associates with the EF-Tu.GDP complex and induces the exchange of GDP to GTP. It remains bound to the aminoacyl-tRNA.EF-Tu.GTP complex up to the GTP hydrolysis stage on the ribosome. The sequence is that of Elongation factor Ts from Cyanothece sp. (strain PCC 7425 / ATCC 29141).